A 354-amino-acid polypeptide reads, in one-letter code: Holliday junction branch migration complex subunit RuvB (354 aa).

The segment at 4–198 (TTDYGASNTG…FGFTAHLDFY (195 aa)) is large ATPase domain (RuvB-L). ATP-binding positions include Leu-37, Arg-38, Gly-79, Lys-82, Thr-83, Thr-84, 145 to 147 (EDF), Arg-188, Tyr-198, and Arg-235. Thr-83 contacts Mg(2+). A small ATPAse domain (RuvB-S) region spans residues 199-269 (PHEELEKLIE…DVKEALALYQ (71 aa)). A head domain (RuvB-H) region spans residues 272–354 (SEGLDRLDIA…TPKDDVSKLF (83 aa)). DNA contacts are provided by Arg-327 and Arg-332.

The protein belongs to the RuvB family. As to quaternary structure, homohexamer. Forms an RuvA(8)-RuvB(12)-Holliday junction (HJ) complex. HJ DNA is sandwiched between 2 RuvA tetramers; dsDNA enters through RuvA and exits via RuvB. An RuvB hexamer assembles on each DNA strand where it exits the tetramer. Each RuvB hexamer is contacted by two RuvA subunits (via domain III) on 2 adjacent RuvB subunits; this complex drives branch migration. In the full resolvosome a probable DNA-RuvA(4)-RuvB(12)-RuvC(2) complex forms which resolves the HJ.

The protein resides in the cytoplasm. The catalysed reaction is ATP + H2O = ADP + phosphate + H(+). In terms of biological role, the RuvA-RuvB-RuvC complex processes Holliday junction (HJ) DNA during genetic recombination and DNA repair, while the RuvA-RuvB complex plays an important role in the rescue of blocked DNA replication forks via replication fork reversal (RFR). RuvA specifically binds to HJ cruciform DNA, conferring on it an open structure. The RuvB hexamer acts as an ATP-dependent pump, pulling dsDNA into and through the RuvAB complex. RuvB forms 2 homohexamers on either side of HJ DNA bound by 1 or 2 RuvA tetramers; 4 subunits per hexamer contact DNA at a time. Coordinated motions by a converter formed by DNA-disengaged RuvB subunits stimulates ATP hydrolysis and nucleotide exchange. Immobilization of the converter enables RuvB to convert the ATP-contained energy into a lever motion, pulling 2 nucleotides of DNA out of the RuvA tetramer per ATP hydrolyzed, thus driving DNA branch migration. The RuvB motors rotate together with the DNA substrate, which together with the progressing nucleotide cycle form the mechanistic basis for DNA recombination by continuous HJ branch migration. Branch migration allows RuvC to scan DNA until it finds its consensus sequence, where it cleaves and resolves cruciform DNA. The polypeptide is Holliday junction branch migration complex subunit RuvB (Bifidobacterium longum (strain NCC 2705)).